A 208-amino-acid chain; its full sequence is Large ribosomal subunit protein uL4 (208 aa).

The segment at 46–84 is disordered; the sequence is QGTHKAKTRAEVRGGGRKPFRQKGTGNARQGSTRSPLMI. The span at 69-80 shows a compositional bias: polar residues; sequence GTGNARQGSTRS.

This sequence belongs to the universal ribosomal protein uL4 family. As to quaternary structure, part of the 50S ribosomal subunit.

One of the primary rRNA binding proteins, this protein initially binds near the 5'-end of the 23S rRNA. It is important during the early stages of 50S assembly. It makes multiple contacts with different domains of the 23S rRNA in the assembled 50S subunit and ribosome. In terms of biological role, forms part of the polypeptide exit tunnel. This is Large ribosomal subunit protein uL4 from Chlorobium limicola (strain DSM 245 / NBRC 103803 / 6330).